The sequence spans 865 residues: Prominin-1 (865 aa).

The signal sequence occupies residues 1–19 (MALVLGSLLLLGLCGNSFS). The Extracellular segment spans residues 20–108 (GGQPSSTDAP…GLKIVYYEAG (89 aa)). Residues 109–129 (IILCCVLGLLFIILMPLVGYF) traverse the membrane as a helical segment. The Cytoplasmic segment spans residues 130–157 (FCMCRCCNKCGGEMHQRQKENGPFLRKC). Residues 158 to 178 (FAISLLVICIIISIGIFYGFV) traverse the membrane as a helical segment. At 179 to 433 (ANHQVRTRIK…LPTLEEYDSY (255 aa)) the chain is on the extracellular side. The N-linked (GlcNAc...) asparagine glycan is linked to Asn-220. Lys-225, Lys-257, and Lys-264 each carry N6-acetyllysine. 3 N-linked (GlcNAc...) asparagine glycosylation sites follow: Asn-274, Asn-395, and Asn-414. The helical transmembrane segment at 434 to 454 (WWLGGLVICSLLTLIVIFYYL) threads the bilayer. The Cytoplasmic segment spans residues 455–486 (GLLCGVCGYDRHATPTTRGCVSNTGGVFLMVG). Residues 487–507 (VGLSFLFCWILMIIVVLTFVF) traverse the membrane as a helical segment. The Extracellular portion of the chain corresponds to 508–792 (GANVEKLICE…LCSYIIDPLN (285 aa)). N-linked (GlcNAc...) asparagine glycans are attached at residues Asn-548, Asn-580, Asn-729, and Asn-730. The chain crosses the membrane as a helical span at residues 793–813 (LFWFGIGKATVFLLPALIFAV). Residues 814–865 (KLAKYYRRMDSEDVYDDVETIPMKNMENGNNGYHKDHVYGIHNPVMTSPSQH) are Cytoplasmic-facing. Residue Ser-863 is modified to Phosphoserine.

Belongs to the prominin family. Interacts with CDHR1 and with actin filaments. Interacts with NAT8 and NAT8B. Isoform 1 and isoform 2 are glycosylated. Post-translationally, acetylation at Lys-225, Lys-257 and Lys-264 by NAT8 and NAT8B may control PROM1 protein expression and its function in cell apoptosis. In terms of tissue distribution, isoform 1 is selectively expressed on CD34 hematopoietic stem and progenitor cells in adult and fetal bone marrow, fetal liver, cord blood and adult peripheral blood. Isoform 1 is not detected on other blood cells. Isoform 1 is also expressed in a number of non-lymphoid tissues including retina, pancreas, placenta, kidney, liver, lung, brain and heart. Found in saliva within small membrane particles. Isoform 2 is predominantly expressed in fetal liver, skeletal muscle, kidney, and heart as well as adult pancreas, kidney, liver, lung, and placenta. Isoform 2 is highly expressed in fetal liver, low in bone marrow, and barely detectable in peripheral blood. Isoform 2 is expressed on hematopoietic stem cells and in epidermal basal cells (at protein level). Expressed in adult retina by rod and cone photoreceptor cells (at protein level).

It localises to the apical cell membrane. Its subcellular location is the cell projection. It is found in the microvillus membrane. The protein localises to the cilium. The protein resides in the photoreceptor outer segment. It localises to the endoplasmic reticulum. Its subcellular location is the endoplasmic reticulum-Golgi intermediate compartment. May play a role in cell differentiation, proliferation and apoptosis. Binds cholesterol in cholesterol-containing plasma membrane microdomains and may play a role in the organization of the apical plasma membrane in epithelial cells. During early retinal development acts as a key regulator of disk morphogenesis. Involved in regulation of MAPK and Akt signaling pathways. In neuroblastoma cells suppresses cell differentiation such as neurite outgrowth in a RET-dependent manner. The chain is Prominin-1 (PROM1) from Homo sapiens (Human).